Here is a 1923-residue protein sequence, read N- to C-terminus: Endoribonuclease Dicer (1923 aa).

In terms of domain architecture, Helicase ATP-binding spans 51–227; it reads LLEAALDHNT…ELEEKIQKLE (177 aa). 64-71 contacts ATP; sequence LNTGSGKT. A DECH box motif is present at residues 175-178; the sequence is DECH. The segment at 256 to 595 is required for interaction with PRKRA and TARBP2; that stretch reads DCGPFTDRSG…LRNKCSKSVD (340 aa). Residues 410 to 433 form a disordered region; the sequence is VSWSDSEDDEEDEEIEEKEKPETN. Residues serine 413 and serine 415 each carry the phosphoserine modification. Residues 414–425 are compositionally biased toward acidic residues; the sequence is DSEDDEEDEEIE. The 170-residue stretch at 433 to 602 folds into the Helicase C-terminal domain; the sequence is NFPSPFTNIL…SVDTGEADTE (170 aa). Residues 629 to 721 form the Dicer dsRNA-binding fold domain; the sequence is AIGHVNRYCA…MPVGKETVKY (93 aa). The PAZ domain maps to 894-1041; it reads KFMEDIEKSE…LVPELCAIHP (148 aa). Phosphoserine is present on residues serine 1015 and serine 1160. Composition is skewed to polar residues over residues 1246–1255 and 1277–1290; these read NANTSTSDGS and SEQSPSPGYSSRTL. The segment at 1246–1291 is disordered; the sequence is NANTSTSDGSPVTAAVPGTTETGEAPPDRTASEQSPSPGYSSRTLG. One can recognise an RNase III 1 domain in the interval 1276–1404; that stretch reads ASEQSPSPGY…TEKWEKDEMT (129 aa). Mg(2+)-binding residues include glutamate 1316, glutamate 1396, and glutamate 1399. 3 positions are modified to phosphoserine: serine 1461, serine 1469, and serine 1471. The region spanning 1667-1825 is the RNase III 2 domain; that stretch reads FENFEKKINY…LAGAIYMDSG (159 aa). Residues glutamate 1706, aspartate 1811, and glutamate 1814 each contribute to the Mg(2+) site. Residues 1853–1915 form the DRBM domain; it reads SPVRELLEME…ARRALRSLKA (63 aa). Serine 1869 is modified (phosphoserine).

The protein belongs to the helicase family. Dicer subfamily. As to quaternary structure, component of the RISC loading complex (RLC), or micro-RNA (miRNA) loading complex (miRLC), which is composed of DICER1, AGO2 and TARBP2; DICER1 and TARBP2 are required to process precursor miRNAs (pre-miRNAs) to mature miRNAs and then load them onto AGO2. Note that the trimeric RLC/miRLC is also referred to as RISC. Interacts with DHX9, AGO1, PIWIL1 and PRKRA. Interacts with AGO2, TARBP2, EIF6, MOV10 and RPL7A (60S ribosome subunit); they form a large RNA-induced silencing complex (RISC). Interacts with BCDIN3D. Interacts (via Dicer dsRNA-binding fold domain) with ALOX5 (via PLAT domain); this interaction enhances arachidonate 5-lipoxygenase activity and modifies the miRNA precursor processing activity of DICER1. Requires Mg(2+) as cofactor. Mn(2+) is required as a cofactor.

The protein localises to the cytoplasm. The catalysed reaction is Endonucleolytic cleavage to 5'-phosphomonoester.. Its function is as follows. Double-stranded RNA (dsRNA) endoribonuclease playing a central role in short dsRNA-mediated post-transcriptional gene silencing. Cleaves naturally occurring long dsRNAs and short hairpin pre-microRNAs (miRNA) into fragments of twenty-one to twenty-three nucleotides with 3' overhang of two nucleotides, producing respectively short interfering RNAs (siRNA) and mature microRNAs. SiRNAs and miRNAs serve as guide to direct the RNA-induced silencing complex (RISC) to complementary RNAs to degrade them or prevent their translation. Gene silencing mediated by siRNAs, also called RNA interference, controls the elimination of transcripts from mobile and repetitive DNA elements of the genome but also the degradation of exogenous RNA of viral origin for instance. The miRNA pathway on the other side is a mean to specifically regulate the expression of target genes. The protein is Endoribonuclease Dicer (DICER1) of Bos taurus (Bovine).